The sequence spans 468 residues: 6-phospho-beta-galactosidase (468 aa).

D-galactose 6-phosphate contacts are provided by Gln-19, His-116, Asn-159, Glu-160, and Asn-297. Residue Glu-160 is the Proton donor of the active site. The active-site Nucleophile is the Glu-375. Ser-428, Trp-429, Lys-435, and Tyr-437 together coordinate D-galactose 6-phosphate.

The protein belongs to the glycosyl hydrolase 1 family.

The enzyme catalyses a 6-phospho-beta-D-galactoside + H2O = D-galactose 6-phosphate + an alcohol. The protein operates within carbohydrate metabolism; lactose degradation; D-galactose 6-phosphate and beta-D-glucose from lactose 6-phosphate: step 1/1. The protein is 6-phospho-beta-galactosidase of Streptococcus uberis (strain ATCC BAA-854 / 0140J).